The following is a 262-amino-acid chain: Hydroxyacylglutathione hydrolase (262 aa).

Zn(2+) contacts are provided by H53, H55, D57, H58, H111, D128, and H166.

The protein belongs to the metallo-beta-lactamase superfamily. Glyoxalase II family. In terms of assembly, monomer. Requires Zn(2+) as cofactor.

The enzyme catalyses an S-(2-hydroxyacyl)glutathione + H2O = a 2-hydroxy carboxylate + glutathione + H(+). Its pathway is secondary metabolite metabolism; methylglyoxal degradation; (R)-lactate from methylglyoxal: step 2/2. Thiolesterase that catalyzes the hydrolysis of S-D-lactoyl-glutathione to form glutathione and D-lactic acid. This Nitrosomonas europaea (strain ATCC 19718 / CIP 103999 / KCTC 2705 / NBRC 14298) protein is Hydroxyacylglutathione hydrolase.